The chain runs to 345 residues: Anthranilate phosphoribosyltransferase (345 aa).

5-phospho-alpha-D-ribose 1-diphosphate-binding positions include glycine 84, 87–88 (GD), threonine 92, 94–97 (NIST), 112–120 (KHGNRSVSS), and serine 124. Residue glycine 84 participates in anthranilate binding. Serine 96 is a Mg(2+) binding site. Asparagine 115 provides a ligand contact to anthranilate. Arginine 170 contacts anthranilate. Residues aspartate 229 and glutamate 230 each contribute to the Mg(2+) site.

Belongs to the anthranilate phosphoribosyltransferase family. In terms of assembly, homodimer. It depends on Mg(2+) as a cofactor.

The enzyme catalyses N-(5-phospho-beta-D-ribosyl)anthranilate + diphosphate = 5-phospho-alpha-D-ribose 1-diphosphate + anthranilate. The protein operates within amino-acid biosynthesis; L-tryptophan biosynthesis; L-tryptophan from chorismate: step 2/5. Catalyzes the transfer of the phosphoribosyl group of 5-phosphorylribose-1-pyrophosphate (PRPP) to anthranilate to yield N-(5'-phosphoribosyl)-anthranilate (PRA). The protein is Anthranilate phosphoribosyltransferase of Xanthomonas axonopodis pv. citri (strain 306).